A 159-amino-acid chain; its full sequence is Nutritionally-regulated adipose and cardiac-enriched protein homolog (159 aa).

The disordered stretch occupies residues 1–67; the sequence is MKTAVHALSP…GDEPRRTTRH (67 aa). Composition is skewed to basic and acidic residues over residues 12–25 and 50–63; these read SRPE…KNEE and SPQE…EPRR. Residues 107-124 form a helical membrane-spanning segment; the sequence is LTACILLALALGMCCGQA.

It localises to the cell membrane. The chain is Nutritionally-regulated adipose and cardiac-enriched protein homolog (NRAC) from Bos taurus (Bovine).